The primary structure comprises 286 residues: 4-hydroxybenzoate octaprenyltransferase (286 aa).

A run of 7 helical transmembrane segments spans residues 20–40 (IGILLLLWPTLWGLWLAADGM), 43–63 (PMILVIFVLGTILMRSAGCAI), 83–103 (LATGIISSREALLVAAGLSLC), 135–155 (FFAMPQAYLGIAFSFGIPMAF), 160–180 (GTVPPLAWLLVLANLFWVIAY), 209–229 (VAGILLCHITFLSILTYAGIL), and 234–254 (IWFYGALLVALGLVIVQYTMI).

This sequence belongs to the UbiA prenyltransferase family. It depends on Mg(2+) as a cofactor.

The protein localises to the cell inner membrane. It catalyses the reaction all-trans-octaprenyl diphosphate + 4-hydroxybenzoate = 4-hydroxy-3-(all-trans-octaprenyl)benzoate + diphosphate. The protein operates within cofactor biosynthesis; ubiquinone biosynthesis. Its function is as follows. Catalyzes the prenylation of para-hydroxybenzoate (PHB) with an all-trans polyprenyl group. Mediates the second step in the final reaction sequence of ubiquinone-8 (UQ-8) biosynthesis, which is the condensation of the polyisoprenoid side chain with PHB, generating the first membrane-bound Q intermediate 3-octaprenyl-4-hydroxybenzoate. The protein is 4-hydroxybenzoate octaprenyltransferase of Nitrosomonas eutropha (strain DSM 101675 / C91 / Nm57).